Consider the following 143-residue polypeptide: Aspartate 1-decarboxylase (143 aa).

Serine 25 functions as the Schiff-base intermediate with substrate; via pyruvic acid in the catalytic mechanism. At serine 25 the chain carries Pyruvic acid (Ser). Substrate is bound at residue threonine 57. Residue tyrosine 58 is the Proton donor of the active site. Residue 73–75 (GAA) participates in substrate binding.

The protein belongs to the PanD family. As to quaternary structure, heterooctamer of four alpha and four beta subunits. The cofactor is pyruvate. Post-translationally, is synthesized initially as an inactive proenzyme, which is activated by self-cleavage at a specific serine bond to produce a beta-subunit with a hydroxyl group at its C-terminus and an alpha-subunit with a pyruvoyl group at its N-terminus.

Its subcellular location is the cytoplasm. The enzyme catalyses L-aspartate + H(+) = beta-alanine + CO2. It functions in the pathway cofactor biosynthesis; (R)-pantothenate biosynthesis; beta-alanine from L-aspartate: step 1/1. Functionally, catalyzes the pyruvoyl-dependent decarboxylation of aspartate to produce beta-alanine. This chain is Aspartate 1-decarboxylase, found in Mycobacterium ulcerans (strain Agy99).